The primary structure comprises 504 residues: Protein DETOXIFICATION 38 (504 aa).

Helical transmembrane passes span 56-76 (LLLR…GMGI), 90-110 (LAAA…MLGM), 139-159 (IVLA…YPIL), 170-190 (YMGS…AVYF), 208-228 (ISAA…YAMG), 234-254 (IAYV…FYVI), 273-295 (GLWS…LWYT), 316-336 (SICM…NAAV), 356-376 (TWTA…VVIA), 401-421 (FLAV…VAVG), 433-453 (IGCY…TFNF), and 457-477 (GIWT…LYVT).

It belongs to the multi antimicrobial extrusion (MATE) (TC 2.A.66.1) family.

The protein localises to the membrane. This is Protein DETOXIFICATION 38 from Arabidopsis thaliana (Mouse-ear cress).